The sequence spans 754 residues: Phosphoribosylformylglycinamidine synthase subunit PurL (754 aa).

The segment at 1 to 21 (MLDTVEHAATTPDQPQPYGEL) is disordered. His-54 is a catalytic residue. ATP is bound by residues Tyr-57 and Lys-101. Glu-103 contacts Mg(2+). Substrate contacts are provided by residues 104–107 (SHNH) and Arg-126. His-105 functions as the Proton acceptor in the catalytic mechanism. Asp-127 is a binding site for Mg(2+). A substrate-binding site is contributed by Gln-252. Asp-280 provides a ligand contact to Mg(2+). 324–326 (ESQ) lines the substrate pocket. ATP is bound by residues Asn-512 and Gly-549. Asn-550 contributes to the Mg(2+) binding site. Ser-552 contacts substrate.

This sequence belongs to the FGAMS family. Monomer. Part of the FGAM synthase complex composed of 1 PurL, 1 PurQ and 2 PurS subunits.

Its subcellular location is the cytoplasm. It carries out the reaction N(2)-formyl-N(1)-(5-phospho-beta-D-ribosyl)glycinamide + L-glutamine + ATP + H2O = 2-formamido-N(1)-(5-O-phospho-beta-D-ribosyl)acetamidine + L-glutamate + ADP + phosphate + H(+). It functions in the pathway purine metabolism; IMP biosynthesis via de novo pathway; 5-amino-1-(5-phospho-D-ribosyl)imidazole from N(2)-formyl-N(1)-(5-phospho-D-ribosyl)glycinamide: step 1/2. Part of the phosphoribosylformylglycinamidine synthase complex involved in the purines biosynthetic pathway. Catalyzes the ATP-dependent conversion of formylglycinamide ribonucleotide (FGAR) and glutamine to yield formylglycinamidine ribonucleotide (FGAM) and glutamate. The FGAM synthase complex is composed of three subunits. PurQ produces an ammonia molecule by converting glutamine to glutamate. PurL transfers the ammonia molecule to FGAR to form FGAM in an ATP-dependent manner. PurS interacts with PurQ and PurL and is thought to assist in the transfer of the ammonia molecule from PurQ to PurL. The polypeptide is Phosphoribosylformylglycinamidine synthase subunit PurL (Mycobacterium bovis (strain ATCC BAA-935 / AF2122/97)).